Consider the following 610-residue polypeptide: UvrABC system protein C (610 aa).

The region spanning 16-94 (SQPGVYRMYD…IKLYQPRYNV (79 aa)) is the GIY-YIG domain. The region spanning 204 to 239 (QQVLTRLIERMEQASQQLKFEDAARYRDQIQAVRQV) is the UVR domain.

This sequence belongs to the UvrC family. In terms of assembly, interacts with UvrB in an incision complex.

It is found in the cytoplasm. In terms of biological role, the UvrABC repair system catalyzes the recognition and processing of DNA lesions. UvrC both incises the 5' and 3' sides of the lesion. The N-terminal half is responsible for the 3' incision and the C-terminal half is responsible for the 5' incision. In Photorhabdus laumondii subsp. laumondii (strain DSM 15139 / CIP 105565 / TT01) (Photorhabdus luminescens subsp. laumondii), this protein is UvrABC system protein C.